The sequence spans 106 residues: Foxo1-corepressor (106 aa).

Residues 1–44 are disordered; that stretch reads MGGPTRRHQEEGSAECLGGPSTRAAPGPGLRDFHFTTAGPSKAD. Residues 78–87 carry the Nuclear export signal motif; the sequence is IGTLYIRLDL. A Phosphothreonine; by PKA modification is found at T93.

Interacts with FOXO1 (via N-terminal domain); the interaction is direct, occurs in a forskolin-independent manner that prevents SIRT1 binding to FOXO1. Interacts with FOXO3. Does not interact with FOXO4. In terms of processing, phosphorylated at Thr-93 by PKA, leading to import into the nucleus. In terms of tissue distribution, expressed in adipocytes. Expressed in brown and white adipose tissue but not in liver. Protein levels in brown and white adipose tissues decrease following fasting (at protein level). Expressed in white and brown adipose tissues. Expressed in adipocytes. Not expressed in liver, skeletal muscle and brain.

Its subcellular location is the cytoplasm. The protein resides in the cytosol. The protein localises to the nucleus. Regulator of adipocytes that acts by repressing FOXO1 transcriptional activity. Acts by promoting acetylation of FOXO1, both by preventing the interaction between FOXO1 and SIRT1 deacetylase, and by mediating acetyltransferase activity in vitro. Regulates insulin sensitivity and energy metabolism. The sequence is that of Foxo1-corepressor (Fcor) from Mus musculus (Mouse).